Reading from the N-terminus, the 152-residue chain is Histone H2B.1 (152 aa).

The span at Met1–Glu23 shows a compositional bias: basic and acidic residues. Positions Met1 to Lys60 are disordered. N6-acetyllysine occurs at positions 7 and 35. Residue Lys148 forms a Glycyl lysine isopeptide (Lys-Gly) (interchain with G-Cter in ubiquitin) linkage.

It belongs to the histone H2B family. In terms of assembly, the nucleosome is a histone octamer containing two molecules each of H2A, H2B, H3 and H4 assembled in one H3-H4 heterotetramer and two H2A-H2B heterodimers. The octamer wraps approximately 147 bp of DNA. Post-translationally, can be acetylated to form H2BK6ac and H2BK33ac. Monoubiquitinated by BRE1 to form H2BK143ub1 and deubiquitinated by UBP26. Required for heterochromatic histone H3 di- and trimethylation at H3K4me. May give a specific tag for epigenetic transcriptional activation.

It is found in the nucleus. Its subcellular location is the chromosome. Core component of nucleosome. Nucleosomes wrap and compact DNA into chromatin, limiting DNA accessibility to the cellular machineries which require DNA as a template. Histones thereby play a central role in transcription regulation, DNA repair, DNA replication and chromosomal stability. DNA accessibility is regulated via a complex set of post-translational modifications of histones, also called histone code, and nucleosome remodeling. The chain is Histone H2B.1 from Oryza sativa subsp. indica (Rice).